The following is an 865-amino-acid chain: Alanine--tRNA ligase (865 aa).

Zn(2+)-binding residues include H552, H556, C654, and H658.

This sequence belongs to the class-II aminoacyl-tRNA synthetase family. It depends on Zn(2+) as a cofactor.

It localises to the cytoplasm. It carries out the reaction tRNA(Ala) + L-alanine + ATP = L-alanyl-tRNA(Ala) + AMP + diphosphate. Catalyzes the attachment of alanine to tRNA(Ala) in a two-step reaction: alanine is first activated by ATP to form Ala-AMP and then transferred to the acceptor end of tRNA(Ala). Also edits incorrectly charged Ser-tRNA(Ala) and Gly-tRNA(Ala) via its editing domain. This Coxiella burnetii (strain RSA 331 / Henzerling II) protein is Alanine--tRNA ligase.